Here is a 521-residue protein sequence, read N- to C-terminus: Cytochrome P450 52A9 (521 aa).

Residue C468 coordinates heme.

The protein belongs to the cytochrome P450 family. Heme serves as cofactor.

The protein resides in the membrane. In terms of biological role, together with an NADPH cytochrome P450 the enzyme system catalyzes the terminal hydroxylation as the first step in the assimilation of alkanes and fatty acids. The protein is Cytochrome P450 52A9 (CYP52A9) of Candida maltosa (Yeast).